A 330-amino-acid polypeptide reads, in one-letter code: Phosphate acyltransferase (330 aa).

The protein belongs to the PlsX family. Homodimer. Probably interacts with PlsY.

The protein resides in the cytoplasm. The enzyme catalyses a fatty acyl-[ACP] + phosphate = an acyl phosphate + holo-[ACP]. It participates in lipid metabolism; phospholipid metabolism. Functionally, catalyzes the reversible formation of acyl-phosphate (acyl-PO(4)) from acyl-[acyl-carrier-protein] (acyl-ACP). This enzyme utilizes acyl-ACP as fatty acyl donor, but not acyl-CoA. This chain is Phosphate acyltransferase, found in Streptococcus pneumoniae (strain JJA).